The chain runs to 142 residues: MLQHKILGLDVGSRTVGIAISDIMGWTAQGLDTLRINEENNELGIDQLVDIIKKHNVGTVVIGLPKNMNNSIGFRGEASLTYKEKLLEAYPSIEIVMWDERLSTMAAERSLLEADVSRQKRKQVIDKMAAVFILQGYLDSLH.

This sequence belongs to the YqgF nuclease family.

It is found in the cytoplasm. Could be a nuclease involved in processing of the 5'-end of pre-16S rRNA. In Staphylococcus aureus (strain JH1), this protein is Putative pre-16S rRNA nuclease.